The primary structure comprises 206 residues: Small ribosomal subunit protein uS4 (206 aa).

The interval 27 to 47 (PSESKCNMNAAPGQHGGRRGR) is disordered. Positions 96 to 158 (QRLDNVVYRM…SRKQIRIQSA (63 aa)) constitute an S4 RNA-binding domain.

Belongs to the universal ribosomal protein uS4 family. As to quaternary structure, part of the 30S ribosomal subunit. Contacts protein S5. The interaction surface between S4 and S5 is involved in control of translational fidelity.

In terms of biological role, one of the primary rRNA binding proteins, it binds directly to 16S rRNA where it nucleates assembly of the body of the 30S subunit. With S5 and S12 plays an important role in translational accuracy. The sequence is that of Small ribosomal subunit protein uS4 from Dichelobacter nodosus (strain VCS1703A).